The chain runs to 499 residues: Putative DBH-like monooxygenase protein 2 (499 aa).

Positions 1–16 (MAHDLLFRLFPLLALG) are cleaved as a signal peptide. Residues 40–156 (NVIFLRWDFD…NTVRVLAAYG (117 aa)) enclose the DOMON domain. The active site involves tyrosine 209. 2 disulfide bridges follow: cysteine 211-cysteine 261 and cysteine 248-cysteine 271. Asparagine 236 carries an N-linked (GlcNAc...) asparagine glycan. Cu cation contacts are provided by histidine 241 and histidine 242. A glycan (N-linked (GlcNAc...) asparagine) is linked at asparagine 250. 3 residues coordinate Cu cation: histidine 308, histidine 389, and histidine 391. Cystine bridges form between cysteine 365–cysteine 480 and cysteine 443–cysteine 465. Histidine 389 is a catalytic residue. The N-linked (GlcNAc...) asparagine glycan is linked to asparagine 404. Methionine 464 contacts Cu cation. Asparagine 476 carries N-linked (GlcNAc...) asparagine glycosylation.

It belongs to the copper type II ascorbate-dependent monooxygenase family. It depends on Cu(2+) as a cofactor.

This chain is Putative DBH-like monooxygenase protein 2 (MOXD2P), found in Homo sapiens (Human).